Reading from the N-terminus, the 88-residue chain is Platelet factor 4 (88 aa).

O-linked (GalNAc...) threonine glycosylation occurs at T7. Intrachain disulfides connect C25/C51 and C27/C67. Residue S41 is modified to Phosphoserine. 76–82 (KKILKKL) is a binding site for heparin.

It belongs to the intercrine alpha (chemokine CxC) family. In terms of assembly, homotetramer. Interacts with TNFAIP6 (via Link domain). Interacts with CCR1. Interacts with CXCR3. Interacts with THBD; this interaction enhances generation of activated protein C. Post-translationally, O-linked glycan consists of Gal-GalNAc disaccharide which is modified with sialic acid residues (microheterogeneity).

The protein resides in the secreted. In terms of biological role, chemokine released during platelet aggregation that plays a role in different biological processes including hematopoiesis, cell proliferation, differentiation, and activation. Acts via different functional receptors including CCR1, CXCR3A or CXCR3B. Upon interaction with CXCR3A receptor, induces activated T-lymphocytes migration mediated via downstream Ras/extracellular signal-regulated kinase (ERK) signaling. Neutralizes the anticoagulant effect of heparin by binding more strongly to heparin than to the chondroitin-4-sulfate chains of the carrier molecule. Plays a role in the inhibition of hematopoiesis and in the maintenance of hematopoietic stem cell (HSC) quiescence. Chemotactic for neutrophils and monocytes via CCR1. Inhibits endothelial cell proliferation. In cooperation with toll-like receptor 8/TLR8, induces chromatin remodeling and activates inflammatory gene expression via the TBK1-IRF5 axis. In addition, induces myofibroblast differentiation and collagen synthesis in different precursor cells, including endothelial cells, by stimulating endothelial-to-mesenchymal transition. Interacts with thrombomodulin/THBD to enhance the activation of protein C and thus potentiates its anticoagulant activity. This Bos taurus (Bovine) protein is Platelet factor 4 (PF4).